A 439-amino-acid chain; its full sequence is 23S rRNA (uracil(1939)-C(5))-methyltransferase RlmD (439 aa).

The TRAM domain maps to 10-69 (KTQLNTRHQAVQVERLDHHGAGIAYLKKKPLFIDGALPGEEVVTQLVEEKSKFARGKLIK). Cys-82, Cys-88, Cys-91, and Cys-169 together coordinate [4Fe-4S] cluster. 6 residues coordinate S-adenosyl-L-methionine: Gln-272, Phe-301, Asn-306, Glu-322, Asn-349, and Asp-370. The active-site Nucleophile is the Cys-396.

Belongs to the class I-like SAM-binding methyltransferase superfamily. RNA M5U methyltransferase family. RlmD subfamily.

It catalyses the reaction uridine(1939) in 23S rRNA + S-adenosyl-L-methionine = 5-methyluridine(1939) in 23S rRNA + S-adenosyl-L-homocysteine + H(+). Catalyzes the formation of 5-methyl-uridine at position 1939 (m5U1939) in 23S rRNA. This chain is 23S rRNA (uracil(1939)-C(5))-methyltransferase RlmD, found in Vibrio campbellii (strain ATCC BAA-1116).